Here is a 105-residue protein sequence, read N- to C-terminus: Large ribosomal subunit protein uL24 (105 aa).

The protein belongs to the universal ribosomal protein uL24 family. As to quaternary structure, part of the 50S ribosomal subunit.

One of two assembly initiator proteins, it binds directly to the 5'-end of the 23S rRNA, where it nucleates assembly of the 50S subunit. Functionally, one of the proteins that surrounds the polypeptide exit tunnel on the outside of the subunit. The polypeptide is Large ribosomal subunit protein uL24 (Dictyoglomus thermophilum (strain ATCC 35947 / DSM 3960 / H-6-12)).